A 147-amino-acid polypeptide reads, in one-letter code: Low molecular weight protein-tyrosine-phosphatase Wzb (147 aa).

Residue Cys-9 is the Nucleophile of the active site. Arg-15 is an active-site residue. Catalysis depends on Asp-115, which acts as the Proton donor.

The protein belongs to the low molecular weight phosphotyrosine protein phosphatase family.

It catalyses the reaction O-phospho-L-tyrosyl-[protein] + H2O = L-tyrosyl-[protein] + phosphate. It participates in glycan metabolism; exopolysaccharide biosynthesis. In terms of biological role, dephosphorylates Wzc. Required for the extracellular polysaccharide colanic acid synthesis. Probably involved in the export of colanic acid from the cell to medium. Involved in protection of cells against contact-dependent growth inhibition (CDI). The protein is Low molecular weight protein-tyrosine-phosphatase Wzb (wzb) of Escherichia coli O157:H7.